The primary structure comprises 308 residues: tRNA pseudouridine synthase B (308 aa).

Residue Asp-37 is the Nucleophile of the active site.

This sequence belongs to the pseudouridine synthase TruB family. Type 1 subfamily.

It catalyses the reaction uridine(55) in tRNA = pseudouridine(55) in tRNA. Responsible for synthesis of pseudouridine from uracil-55 in the psi GC loop of transfer RNAs. This chain is tRNA pseudouridine synthase B, found in Deinococcus radiodurans (strain ATCC 13939 / DSM 20539 / JCM 16871 / CCUG 27074 / LMG 4051 / NBRC 15346 / NCIMB 9279 / VKM B-1422 / R1).